Here is a 145-residue protein sequence, read N- to C-terminus: Protein SprT-like (145 aa).

Residues 5–141 enclose the SprT-like domain; that stretch reads DYVREVSLAD…CGRCHGRLIK (137 aa). His64 contributes to the Zn(2+) binding site. Residue Glu65 is part of the active site. His68 provides a ligand contact to Zn(2+).

Belongs to the SprT family. The cofactor is Zn(2+).

Its subcellular location is the cytoplasm. In Streptococcus equi subsp. zooepidemicus (strain H70), this protein is Protein SprT-like.